A 462-amino-acid chain; its full sequence is ATP synthase subunit beta (462 aa).

150-157 is a binding site for ATP; the sequence is GGAGVGKT.

It belongs to the ATPase alpha/beta chains family. F-type ATPases have 2 components, CF(1) - the catalytic core - and CF(0) - the membrane proton channel. CF(1) has five subunits: alpha(3), beta(3), gamma(1), delta(1), epsilon(1). CF(0) has three main subunits: a(1), b(2) and c(9-12). The alpha and beta chains form an alternating ring which encloses part of the gamma chain. CF(1) is attached to CF(0) by a central stalk formed by the gamma and epsilon chains, while a peripheral stalk is formed by the delta and b chains.

It is found in the cell membrane. It catalyses the reaction ATP + H2O + 4 H(+)(in) = ADP + phosphate + 5 H(+)(out). Its function is as follows. Produces ATP from ADP in the presence of a proton gradient across the membrane. The catalytic sites are hosted primarily by the beta subunits. This Wigglesworthia glossinidia brevipalpis protein is ATP synthase subunit beta.